A 130-amino-acid chain; its full sequence is UPF0102 protein RPA0323 (130 aa).

This sequence belongs to the UPF0102 family.

The polypeptide is UPF0102 protein RPA0323 (Rhodopseudomonas palustris (strain ATCC BAA-98 / CGA009)).